The following is a 160-amino-acid chain: Cytochrome c-type biogenesis protein CcmE (160 aa).

Residues 1–8 (MNPRRKNR) lie on the Cytoplasmic side of the membrane. A helical; Signal-anchor for type II membrane protein membrane pass occupies residues 9–29 (LILVMLVLVGLGLATALVMYA). At 30–160 (LRSNIDLFYT…AVGDNSVRPS (131 aa)) the chain is on the periplasmic side. The heme site is built by H130 and Y134. Residues 133–148 (KYTPPEIEDAMKKDHP) are compositionally biased toward basic and acidic residues. Positions 133-160 (KYTPPEIEDAMKKDHPAQAVGDNSVRPS) are disordered.

It belongs to the CcmE/CycJ family.

It is found in the cell inner membrane. Functionally, heme chaperone required for the biogenesis of c-type cytochromes. Transiently binds heme delivered by CcmC and transfers the heme to apo-cytochromes in a process facilitated by CcmF and CcmH. The protein is Cytochrome c-type biogenesis protein CcmE of Erwinia tasmaniensis (strain DSM 17950 / CFBP 7177 / CIP 109463 / NCPPB 4357 / Et1/99).